The sequence spans 141 residues: Large ribosomal subunit protein uL11 (141 aa).

The protein belongs to the universal ribosomal protein uL11 family. As to quaternary structure, part of the ribosomal stalk of the 50S ribosomal subunit. Interacts with L10 and the large rRNA to form the base of the stalk. L10 forms an elongated spine to which L12 dimers bind in a sequential fashion forming a multimeric L10(L12)X complex. One or more lysine residues are methylated.

Forms part of the ribosomal stalk which helps the ribosome interact with GTP-bound translation factors. This chain is Large ribosomal subunit protein uL11, found in Geobacillus sp. (strain WCH70).